We begin with the raw amino-acid sequence, 273 residues long: Undecaprenyl-diphosphatase (273 aa).

7 helical membrane passes run 6-26, 45-65, 90-110, 116-136, 190-210, 222-242, and 252-272; these read SLLI…LPVS, AKTF…VMFW, LTLI…LVFH, LFNP…LIAA, YAAS…ATVL, ADIP…LIAI, and ISFI…YVVF.

Belongs to the UppP family.

The protein resides in the cell inner membrane. It carries out the reaction di-trans,octa-cis-undecaprenyl diphosphate + H2O = di-trans,octa-cis-undecaprenyl phosphate + phosphate + H(+). Catalyzes the dephosphorylation of undecaprenyl diphosphate (UPP). Confers resistance to bacitracin. The chain is Undecaprenyl-diphosphatase from Salmonella heidelberg (strain SL476).